We begin with the raw amino-acid sequence, 362 residues long: Beta-ketoacyl-[acyl-carrier-protein] synthase III 2 (362 aa).

Active-site residues include C113 and H251. The ACP-binding stretch occupies residues 252–256; the sequence is QANIR. N281 is an active-site residue.

Belongs to the thiolase-like superfamily. FabH family. Homodimer.

It is found in the cytoplasm. The enzyme catalyses malonyl-[ACP] + acetyl-CoA + H(+) = 3-oxobutanoyl-[ACP] + CO2 + CoA. It functions in the pathway lipid metabolism; fatty acid biosynthesis. Catalyzes the condensation reaction of fatty acid synthesis by the addition to an acyl acceptor of two carbons from malonyl-ACP. Catalyzes the first condensation reaction which initiates fatty acid synthesis and may therefore play a role in governing the total rate of fatty acid production. Possesses both acetoacetyl-ACP synthase and acetyl transacylase activities. Its substrate specificity determines the biosynthesis of branched-chain and/or straight-chain of fatty acids. The sequence is that of Beta-ketoacyl-[acyl-carrier-protein] synthase III 2 from Vibrio cholerae serotype O1 (strain ATCC 39315 / El Tor Inaba N16961).